We begin with the raw amino-acid sequence, 294 residues long: 4-hydroxy-tetrahydrodipicolinate synthase (294 aa).

Pyruvate is bound at residue Thr45. Catalysis depends on Tyr133, which acts as the Proton donor/acceptor. The Schiff-base intermediate with substrate role is filled by Lys161. Ile203 is a pyruvate binding site.

The protein belongs to the DapA family. Homotetramer; dimer of dimers.

Its subcellular location is the cytoplasm. The enzyme catalyses L-aspartate 4-semialdehyde + pyruvate = (2S,4S)-4-hydroxy-2,3,4,5-tetrahydrodipicolinate + H2O + H(+). It participates in amino-acid biosynthesis; L-lysine biosynthesis via DAP pathway; (S)-tetrahydrodipicolinate from L-aspartate: step 3/4. In terms of biological role, catalyzes the condensation of (S)-aspartate-beta-semialdehyde [(S)-ASA] and pyruvate to 4-hydroxy-tetrahydrodipicolinate (HTPA). This is 4-hydroxy-tetrahydrodipicolinate synthase from Shewanella sp. (strain MR-7).